A 1004-amino-acid polypeptide reads, in one-letter code: MAASQLLAAAVAAAVFLAALLVPPARCQQQQVANPGPRVRQAARIDAVRDELAAEVQAKYGFCMANVQEDFTQAFSFSNASFVSDCMEETQGQMTGMLCGKAEIEIYVKSLGKKPSTRVSRNCDQNSWALGCQPGWACARQDSSSSGREVPSRAVNCRPCYPGFFCPRGLTCMIPCPLGAYCPLATLNDTTGLCDPYSYQITPGSNTACGTADSWADVITTDDVFCPPGHHCPTTTQKFNCTEGYYCRKGSTEEHKCIWKNTCKENSTKEATALFGGILIVILSVVLLLVYNCSDQFIKIRAKILSKSRRKAATIAQESATARGRWKLAKELVLSHELEMSESDQLAASSNEARHATEGNGKRSKNRKKLAHARTERFRRAYSQIGRERVLQPDNDKITLSGVVALAAENRSRRPMFEVVFKGLTLSIGKKKLLQCVTGKLSPGRVTAIMGPSGAGKTTFLNAVLGKTTGYKKDGLVLINGKSGSMQSYKKIIGFVPQDDIVHGNLTVEENLWFSACCRSSKGMSKSDKIIVLERVIGSLGLQEIRNSLVGTVEKRGISGGQRKRVNVGIEMVMEPSLLILDEPTTGLDSASSQLLLRALRHEALQGVNVCAVIHQPSYTLFNMFDDFVLLARGGLIAYLGPISEVETYFSSLGIKVPERENPPDYYIDILEGITKTKMRGHAAPKHLPLLWMLRNGYEVPEYMQKDLEDINNVHELYTVGSMSREESFGDQSENADSVHQNVREPYSLLDRKTPGVLAQYKYYLGRVTKQRLREATLQAVDYLILCIAGICIGTIAKVKDDTFGVASYGYTIIAVSLLCQLAALRSFSPERLQYWRERESGMSTLAYFLARDTIDHFNTLVKPVAFLSTFYFFNNPRSEFKDNYLVFLALVYCVTGIGYTFAIWFELGLAQLCSALIPVVLVLVGTQPNIPNFIKGLCYPKWALEALIIAGAKKYSGVWLITRCGALLKGGYDINNFVLCIVIVMLMGVLFRFIALLSLLKLK.

The signal sequence occupies residues 1 to 27; it reads MAASQLLAAAVAAAVFLAALLVPPARC. A helical transmembrane segment spans residues 271 to 291; the sequence is ATALFGGILIVILSVVLLLVY. Residues 343–373 form a disordered region; the sequence is SDQLAASSNEARHATEGNGKRSKNRKKLAHA. The segment covering 352 to 361 has biased composition (basic and acidic residues); the sequence is EARHATEGNG. The span at 362–372 shows a compositional bias: basic residues; sequence KRSKNRKKLAH. The ABC transporter domain occupies 419-659; that stretch reads VVFKGLTLSI…FSSLGIKVPE (241 aa). 451-458 provides a ligand contact to ATP; the sequence is GPSGAGKT. Helical transmembrane passes span 776-796, 804-824, 886-906, 907-927, 943-963, and 978-998; these read ATLQAVDYLILCIAGICIGTI, FGVASYGYTIIAVSLLCQLAA, LVFLALVYCVTGIGYTFAIWF, ELGLAQLCSALIPVVLVLVGT, WALEALIIAGAKKYSGVWLIT, and FVLCIVIVMLMGVLFRFIALL.

Belongs to the ABC transporter superfamily. ABCG family. Eye pigment precursor importer (TC 3.A.1.204) subfamily.

The protein localises to the membrane. The polypeptide is ABC transporter G family member 25 (Oryza sativa subsp. japonica (Rice)).